A 109-amino-acid chain; its full sequence is Parvalbumin, thymic (109 aa).

At A2 the chain carries N-acetylalanine. EF-hand domains follow at residues 39 to 74 (KTPD…FSSS) and 78 to 109 (LTSA…LVKA). Residues D52, D54, S56, E63, D91, D93, D95, K97, and E102 each coordinate Ca(2+).

The protein belongs to the parvalbumin family.

In terms of biological role, appears to promote immune maturation in bone marrow cells in culture. Binds two calcium ions. The polypeptide is Parvalbumin, thymic (Gallus gallus (Chicken)).